Here is a 308-residue protein sequence, read N- to C-terminus: Carbonic anhydrase 6 (308 aa).

The signal sequence occupies residues 1 to 17; the sequence is MRALVLLLSLFLLGGQA. Residues 21 to 278 enclose the Alpha-carbonic anhydrase domain; that stretch reads SDWTYSEGAL…LNHRVVESNF (258 aa). Cys42 and Cys224 form a disulfide bridge. N-linked (GlcNAc...) asparagine glycosylation is present at Asn67. His85 functions as the Proton donor/acceptor in the catalytic mechanism. Zn(2+) contacts are provided by His111, His113, and His138. 220-221 contributes to the substrate binding site; that stretch reads TT. Asn256 carries N-linked (GlcNAc...) asparagine glycosylation.

Belongs to the alpha-carbonic anhydrase family. The cofactor is Zn(2+). As to expression, major constituent of saliva.

It is found in the secreted. It carries out the reaction hydrogencarbonate + H(+) = CO2 + H2O. Its activity is regulated as follows. Inhibited by coumarins, sulfonamide derivatives such as acetazolamide (AZA), saccharin and Foscarnet (phosphonoformate trisodium salt). Its function is as follows. Reversible hydration of carbon dioxide. Its role in saliva is unknown. This Homo sapiens (Human) protein is Carbonic anhydrase 6 (CA6).